The chain runs to 198 residues: Nucleoplasmin (198 aa).

Positions 35–38 (SDED) are acidic tract A1. Residues 125 to 145 (SWAEEEGEEEVEEEEEEEDPE) show a composition bias toward acidic residues. A disordered region spans residues 125 to 198 (SWAEEEGEEE…GRGRKPAAKK (74 aa)). The interval 128–145 (EEEGEEEVEEEEEEEDPE) is acidic tract A2. Basic residues predominate over residues 150–167 (AVKRPAASKKGSQAKKKK). Positions 152-167 (KRPAASKKGSQAKKKK) match the Bipartite nuclear localization signal motif. The segment at 172-174 (EEE) is acidic tract A3. A compositionally biased stretch (basic residues) spans 183–198 (KKGKGAGRGRKPAAKK).

Belongs to the nucleoplasmin family. In terms of assembly, homopentamer. In terms of tissue distribution, expressed in oocytes.

The protein localises to the nucleus. Functionally, acts as a chaperone for histones, such as histone H2A-H2B, and thus regulates the assembly of nucleosome cores. Involved in chromatin remodeling, especially during fertilization and early embryonic development. May be involved in sperm chromatin decondensation during fertilization. This chain is Nucleoplasmin, found in Rhinella marina (Cane toad).